The following is a 525-amino-acid chain: Estrogen receptor (525 aa).

The interval 1-59 (PTSPLVFVPSSPRLSPFMHPPSHHYLETTSTPVYRSSVSSSQQQLSREDQCGTSDDSYS) is disordered. Residues 1-82 (PTSPLVFVPS…GFEMAKEMRF (82 aa)) form a modulating region. The span at 36-45 (SSVSSSQQQL) shows a compositional bias: low complexity. 2 consecutive NR C4-type zinc fingers follow at residues 83-103 (CAVC…CEGC) and 119-143 (CPAT…LRKC). Positions 83 to 148 (CAVCSDYASG…RLRKCYQVGM (66 aa)) form a DNA-binding region, nuclear receptor. The tract at residues 149-209 (MKGGVRKDRG…GGGKSSIIGM (61 aa)) is hinge. The segment covering 154 to 182 (RKDRGRVLRRDKRRTGTSDKASKDLEHRT) has biased composition (basic and acidic residues). Positions 154–203 (RKDRGRVLRRDKRRTGTSDKASKDLEHRTAPPQDRRKHSSSSSSAGGGGK) are disordered. Residues 210-446 (SPDQVLLLLQ…DLLLEMLDAH (237 aa)) form the NR LBD domain. The span at 452–465 (DRPAESWSQADREP) shows a compositional bias: basic and acidic residues. The segment at 452-525 (DRPAESWSQA…GPRSDCTHIL (74 aa)) is disordered. Gly residues predominate over residues 479 to 493 (SGGGDGGPSSAGSGS).

The protein belongs to the nuclear hormone receptor family. NR3 subfamily. As to quaternary structure, binds DNA as a homodimer. Can form a heterodimer with ER-beta. In terms of tissue distribution, abundant in the liver, less abundant in the testes and barely detectable in the ovary and brain.

The protein localises to the nucleus. In terms of biological role, the steroid hormones and their receptors are involved in the regulation of eukaryotic gene expression and affect cellular proliferation and differentiation in target tissues. The protein is Estrogen receptor (esr1) of Micropogonias undulatus (Atlantic croaker).